We begin with the raw amino-acid sequence, 167 residues long: UPF0102 protein RB9115 (167 aa).

Belongs to the UPF0102 family.

The polypeptide is UPF0102 protein RB9115 (Rhodopirellula baltica (strain DSM 10527 / NCIMB 13988 / SH1)).